A 277-amino-acid chain; its full sequence is Putative hydro-lyase SCO1412 (277 aa).

The protein belongs to the D-glutamate cyclase family.

The chain is Putative hydro-lyase SCO1412 from Streptomyces coelicolor (strain ATCC BAA-471 / A3(2) / M145).